Reading from the N-terminus, the 300-residue chain is Ribosomal protein bS6--L-glutamate ligase (300 aa).

Residues Met-104 to Glu-287 enclose the ATP-grasp domain. ATP-binding positions include Lys-141, Glu-178–Tyr-179, Asp-187, and Arg-211–Asn-213. Asp-248, Glu-260, and Asn-262 together coordinate Mg(2+). Mn(2+)-binding residues include Asp-248, Glu-260, and Asn-262.

This sequence belongs to the RimK family. It depends on Mg(2+) as a cofactor. The cofactor is Mn(2+).

In terms of biological role, an L-glutamate ligase that catalyzes the ATP-dependent post-translational addition of glutamate residues to the C-terminus of ribosomal protein bS6 (RpsF). Is also able to catalyze the synthesis of poly-alpha-glutamate in vitro, via ATP hydrolysis from unprotected glutamate as substrate. The number of glutamate residues added to either RpsF or to poly-alpha-glutamate changes with pH. The sequence is that of Ribosomal protein bS6--L-glutamate ligase from Escherichia coli O139:H28 (strain E24377A / ETEC).